The chain runs to 265 residues: Tryptophan synthase alpha chain (265 aa).

Catalysis depends on proton acceptor residues Glu-49 and Asp-60.

It belongs to the TrpA family. Tetramer of two alpha and two beta chains.

The enzyme catalyses (1S,2R)-1-C-(indol-3-yl)glycerol 3-phosphate + L-serine = D-glyceraldehyde 3-phosphate + L-tryptophan + H2O. The protein operates within amino-acid biosynthesis; L-tryptophan biosynthesis; L-tryptophan from chorismate: step 5/5. The alpha subunit is responsible for the aldol cleavage of indoleglycerol phosphate to indole and glyceraldehyde 3-phosphate. The protein is Tryptophan synthase alpha chain of Polynucleobacter necessarius subsp. necessarius (strain STIR1).